The primary structure comprises 266 residues: Prolactin-7A1 (266 aa).

Positions 1 to 30 (MPLSFTQPCSSGALLLLVVSNLLLWENVAC) are cleaved as a signal peptide. N-linked (GlcNAc...) asparagine glycosylation is found at Asn36, Asn58, Asn110, Asn149, and Asn157. Disulfide bonds link Cys114-Cys231 and Cys248-Cys257.

This sequence belongs to the somatotropin/prolactin family. In terms of tissue distribution, expressed specifically in the placenta. Detected only in the trophoblast giant cells.

Its subcellular location is the secreted. The chain is Prolactin-7A1 (Prl7a1) from Mus musculus (Mouse).